A 120-amino-acid chain; its full sequence is uncharacterized protein (120 aa).

The segment at 80–99 (PTRKLQTPLNEPPRTWRKTA) is disordered.

This is an uncharacterized protein from Goose circovirus (GoCV).